Here is a 410-residue protein sequence, read N- to C-terminus: 2-oxoisovalerate dehydrogenase subunit alpha (410 aa).

The protein belongs to the BCKDHA family. In terms of assembly, heterodimer of an alpha and a beta chain. It depends on thiamine diphosphate as a cofactor.

The enzyme catalyses N(6)-[(R)-lipoyl]-L-lysyl-[protein] + 3-methyl-2-oxobutanoate + H(+) = N(6)-[(R)-S(8)-2-methylpropanoyldihydrolipoyl]-L-lysyl-[protein] + CO2. Its function is as follows. The branched-chain alpha-keto dehydrogenase complex catalyzes the overall conversion of alpha-keto acids to acyl-CoA and CO(2). It contains multiple copies of three enzymatic components: branched-chain alpha-keto acid decarboxylase (E1), lipoamide acyltransferase (E2) and lipoamide dehydrogenase (E3). In Pseudomonas putida (Arthrobacter siderocapsulatus), this protein is 2-oxoisovalerate dehydrogenase subunit alpha (bkdA1).